We begin with the raw amino-acid sequence, 226 residues long: 2,3-bisphosphoglycerate-dependent phosphoglycerate mutase (226 aa).

Substrate-binding positions include 8–15 (RHGQSVWN), 21–22 (TG), Arg-58, 109–112 (ERMY), Lys-120, 136–137 (RR), and 180–181 (GN). His-9 serves as the catalytic Tele-phosphohistidine intermediate. The active-site Proton donor/acceptor is Glu-109.

Belongs to the phosphoglycerate mutase family. BPG-dependent PGAM subfamily.

The catalysed reaction is (2R)-2-phosphoglycerate = (2R)-3-phosphoglycerate. Its pathway is carbohydrate degradation; glycolysis; pyruvate from D-glyceraldehyde 3-phosphate: step 3/5. Its function is as follows. Catalyzes the interconversion of 2-phosphoglycerate and 3-phosphoglycerate. The sequence is that of 2,3-bisphosphoglycerate-dependent phosphoglycerate mutase from Chlamydia muridarum (strain MoPn / Nigg).